We begin with the raw amino-acid sequence, 208 residues long: Ribosomal RNA small subunit methyltransferase J (208 aa).

Residues 54 to 55 (RD), 70 to 71 (ER), and D122 each bind S-adenosyl-L-methionine.

It belongs to the methyltransferase superfamily. RsmJ family.

Its subcellular location is the cytoplasm. The catalysed reaction is guanosine(1516) in 16S rRNA + S-adenosyl-L-methionine = N(2)-methylguanosine(1516) in 16S rRNA + S-adenosyl-L-homocysteine + H(+). Its function is as follows. Specifically methylates the guanosine in position 1516 of 16S rRNA. The chain is Ribosomal RNA small subunit methyltransferase J from Agrobacterium fabrum (strain C58 / ATCC 33970) (Agrobacterium tumefaciens (strain C58)).